The primary structure comprises 235 residues: Urease accessory protein UreF (235 aa).

The protein belongs to the UreF family. As to quaternary structure, ureD, UreF and UreG form a complex that acts as a GTP-hydrolysis-dependent molecular chaperone, activating the urease apoprotein by helping to assemble the nickel containing metallocenter of UreC. The UreE protein probably delivers the nickel.

It is found in the cytoplasm. In terms of biological role, required for maturation of urease via the functional incorporation of the urease nickel metallocenter. The protein is Urease accessory protein UreF of Haemophilus influenzae (strain ATCC 51907 / DSM 11121 / KW20 / Rd).